Consider the following 149-residue polypeptide: Large ribosomal subunit protein uL13 (149 aa).

It belongs to the universal ribosomal protein uL13 family. In terms of assembly, part of the 50S ribosomal subunit.

Its function is as follows. This protein is one of the early assembly proteins of the 50S ribosomal subunit, although it is not seen to bind rRNA by itself. It is important during the early stages of 50S assembly. This Cyanothece sp. (strain PCC 7425 / ATCC 29141) protein is Large ribosomal subunit protein uL13.